The following is a 493-amino-acid chain: Cytochrome c-552 (493 aa).

Residues 1-25 (MEKKLKSWQGWLLSGGSMVVVFVLG) form the signal peptide. His116 is a binding site for heme c. Heme contacts are provided by Cys144, Cys147, and Lys148. Positions 182, 185, 186, 224, 227, and 228 each coordinate heme c. Residues Glu230, Tyr231, Lys276, and Gln278 each coordinate Ca(2+). Tyr231 provides a ligand contact to substrate. His279 is a binding site for substrate. Positions 290, 297, 300, 301, 315, 328, 331, 332, and 407 each coordinate heme c.

It belongs to the cytochrome c-552 family. The cofactor is Ca(2+). Heme c is required as a cofactor.

Its subcellular location is the periplasm. The catalysed reaction is 6 Fe(III)-[cytochrome c] + NH4(+) + 2 H2O = 6 Fe(II)-[cytochrome c] + nitrite + 8 H(+). It functions in the pathway nitrogen metabolism; nitrate reduction (assimilation). Functionally, catalyzes the reduction of nitrite to ammonia, consuming six electrons in the process. The polypeptide is Cytochrome c-552 (Bacteroides thetaiotaomicron (strain ATCC 29148 / DSM 2079 / JCM 5827 / CCUG 10774 / NCTC 10582 / VPI-5482 / E50)).